The following is a 278-amino-acid chain: Formamidopyrimidine-DNA glycosylase (278 aa).

The Schiff-base intermediate with DNA role is filled by proline 2. The active-site Proton donor is the glutamate 3. The active-site Proton donor; for beta-elimination activity is lysine 58. 2 residues coordinate DNA: histidine 92 and arginine 111. The segment at 239–273 (HVYGKKGVPCERCGTPIEKIKVAQRGTHFCPKCQI) adopts an FPG-type zinc-finger fold. Residue arginine 263 is the Proton donor; for delta-elimination activity of the active site.

It belongs to the FPG family. Monomer. Zn(2+) is required as a cofactor.

The enzyme catalyses Hydrolysis of DNA containing ring-opened 7-methylguanine residues, releasing 2,6-diamino-4-hydroxy-5-(N-methyl)formamidopyrimidine.. It catalyses the reaction 2'-deoxyribonucleotide-(2'-deoxyribose 5'-phosphate)-2'-deoxyribonucleotide-DNA = a 3'-end 2'-deoxyribonucleotide-(2,3-dehydro-2,3-deoxyribose 5'-phosphate)-DNA + a 5'-end 5'-phospho-2'-deoxyribonucleoside-DNA + H(+). Functionally, involved in base excision repair of DNA damaged by oxidation or by mutagenic agents. Acts as a DNA glycosylase that recognizes and removes damaged bases. Has a preference for oxidized purines, such as 7,8-dihydro-8-oxoguanine (8-oxoG). Has AP (apurinic/apyrimidinic) lyase activity and introduces nicks in the DNA strand. Cleaves the DNA backbone by beta-delta elimination to generate a single-strand break at the site of the removed base with both 3'- and 5'-phosphates. The polypeptide is Formamidopyrimidine-DNA glycosylase (Latilactobacillus sakei subsp. sakei (strain 23K) (Lactobacillus sakei subsp. sakei)).